Consider the following 466-residue polypeptide: Cysteine--tRNA ligase (466 aa).

Residue C28 participates in Zn(2+) binding. The 'HIGH' region signature appears at 30–40 (PTVYNYIHIGN). C208, H233, and E237 together coordinate Zn(2+). The 'KMSKS' region signature appears at 265-269 (KMSKS). Residue K268 coordinates ATP.

This sequence belongs to the class-I aminoacyl-tRNA synthetase family. As to quaternary structure, monomer. It depends on Zn(2+) as a cofactor.

The protein localises to the cytoplasm. The enzyme catalyses tRNA(Cys) + L-cysteine + ATP = L-cysteinyl-tRNA(Cys) + AMP + diphosphate. This chain is Cysteine--tRNA ligase, found in Staphylococcus aureus (strain USA300).